We begin with the raw amino-acid sequence, 133 residues long: MFDIGFWELVLIAIVALVVLGPERLPHAIRSVAKFVSAAKSMANSVKDELAHELKVQELQENLRKAEQMGMQNLSPELQKSVESLKQAAQEVQRPYAATPSSEASSTSSNPSSATEPDVRLDSASQPAEKKAE.

A helical membrane pass occupies residues 1–21 (MFDIGFWELVLIAIVALVVLG). The tract at residues 67–133 (EQMGMQNLSP…ASQPAEKKAE (67 aa)) is disordered. The segment covering 70 to 84 (GMQNLSPELQKSVES) has biased composition (polar residues). Over residues 97–116 (AATPSSEASSTSSNPSSATE) the composition is skewed to low complexity.

It belongs to the TatB family. In terms of assembly, the Tat system comprises two distinct complexes: a TatABC complex, containing multiple copies of TatA, TatB and TatC subunits, and a separate TatA complex, containing only TatA subunits. Substrates initially bind to the TatABC complex, which probably triggers association of the separate TatA complex to form the active translocon.

It is found in the cell inner membrane. Its function is as follows. Part of the twin-arginine translocation (Tat) system that transports large folded proteins containing a characteristic twin-arginine motif in their signal peptide across membranes. Together with TatC, TatB is part of a receptor directly interacting with Tat signal peptides. TatB may form an oligomeric binding site that transiently accommodates folded Tat precursor proteins before their translocation. This is Sec-independent protein translocase protein TatB from Vibrio cholerae serotype O1 (strain ATCC 39315 / El Tor Inaba N16961).